The sequence spans 606 residues: DNA mismatch repair protein MutL (606 aa).

The disordered stretch occupies residues 348–378; the sequence is QPHAQRPQAPWSAETSPFRPYPPAAGFSERP.

It belongs to the DNA mismatch repair MutL/HexB family.

Functionally, this protein is involved in the repair of mismatches in DNA. It is required for dam-dependent methyl-directed DNA mismatch repair. May act as a 'molecular matchmaker', a protein that promotes the formation of a stable complex between two or more DNA-binding proteins in an ATP-dependent manner without itself being part of a final effector complex. This Rhizobium etli (strain CIAT 652) protein is DNA mismatch repair protein MutL.